The following is a 290-amino-acid chain: Barley B recombinant-like protein C (290 aa).

2 disordered regions span residues 60-90 (PHHH…YGMM) and 102-183 (QPEP…RKNI). Over residues 104-116 (EPQPQLQHPPSPP) the composition is skewed to pro residues. Over residues 138 to 158 (PPKKRQQGRQPKVLRPKKPKK) the composition is skewed to basic residues.

This sequence belongs to the BBR/BPC family.

It is found in the nucleus. Functionally, transcriptional regulator that specifically binds to GA-rich elements (GAGA-repeats) present in regulatory sequences of genes involved in developmental processes. This chain is Barley B recombinant-like protein C, found in Oryza sativa subsp. japonica (Rice).